An 82-amino-acid polypeptide reads, in one-letter code: Capsid protein G8P (82 aa).

The first 29 residues, 1–29 (MRVLSTVLAAKNKIALGAATMLVSAGSFA), serve as a signal peptide directing secretion. Over 30–54 (AEPNAATNYATEAMDSLKTQAIDLI) the chain is Periplasmic. The chain crosses the membrane as a helical span at residues 55 to 74 (SQTWPVVTTVVVAGLVIRLF). Residues 75–82 (KKFSSKAV) lie on the Cytoplasmic side of the membrane.

It belongs to the inovirus capsid protein family. As to quaternary structure, homomultimerizes. There are several thousands of this protein in the phage capsid.

The protein resides in the virion. Its subcellular location is the host membrane. Functionally, self assembles to form a helical capsid wrapping up the viral genomic DNA. The capsid displays a filamentous structure with a length of 760-1950 nm and a width of 6-8 nm. The virion assembly and budding take place at the host inner membrane. This chain is Capsid protein G8P (VIII), found in Salmonella phage IKe (Bacteriophage IKe).